The sequence spans 94 residues: Probable Fe(2+)-trafficking protein (94 aa).

It belongs to the Fe(2+)-trafficking protein family.

Its function is as follows. Could be a mediator in iron transactions between iron acquisition and iron-requiring processes, such as synthesis and/or repair of Fe-S clusters in biosynthetic enzymes. The protein is Probable Fe(2+)-trafficking protein of Marinomonas sp. (strain MWYL1).